A 579-amino-acid polypeptide reads, in one-letter code: Aspartate--tRNA(Asp/Asn) ligase (579 aa).

Glu-171 lines the L-aspartate pocket. The aspartate stretch occupies residues 195–198 (QLFK). Residue Arg-217 participates in L-aspartate binding. Residues 217–219 (RDE) and Gln-226 each bind ATP. His-444 is a binding site for L-aspartate. Glu-475 serves as a coordination point for ATP. Position 482 (Arg-482) interacts with L-aspartate. ATP is bound at residue 527–530 (GLDR).

This sequence belongs to the class-II aminoacyl-tRNA synthetase family. Type 1 subfamily. As to quaternary structure, homodimer.

Its subcellular location is the cytoplasm. The enzyme catalyses tRNA(Asx) + L-aspartate + ATP = L-aspartyl-tRNA(Asx) + AMP + diphosphate. Aspartyl-tRNA synthetase with relaxed tRNA specificity since it is able to aspartylate not only its cognate tRNA(Asp) but also tRNA(Asn). Reaction proceeds in two steps: L-aspartate is first activated by ATP to form Asp-AMP and then transferred to the acceptor end of tRNA(Asp/Asn). This Thermotoga maritima (strain ATCC 43589 / DSM 3109 / JCM 10099 / NBRC 100826 / MSB8) protein is Aspartate--tRNA(Asp/Asn) ligase.